The primary structure comprises 198 residues: ATP-dependent Clp protease proteolytic subunit 1 (198 aa).

S96 functions as the Nucleophile in the catalytic mechanism. The active site involves H121.

The protein belongs to the peptidase S14 family. Fourteen ClpP subunits assemble into 2 heptameric rings which stack back to back to give a disk-like structure with a central cavity, resembling the structure of eukaryotic proteasomes.

The protein resides in the cytoplasm. The catalysed reaction is Hydrolysis of proteins to small peptides in the presence of ATP and magnesium. alpha-casein is the usual test substrate. In the absence of ATP, only oligopeptides shorter than five residues are hydrolyzed (such as succinyl-Leu-Tyr-|-NHMec, and Leu-Tyr-Leu-|-Tyr-Trp, in which cleavage of the -Tyr-|-Leu- and -Tyr-|-Trp bonds also occurs).. Its function is as follows. Cleaves peptides in various proteins in a process that requires ATP hydrolysis. Has a chymotrypsin-like activity. Plays a major role in the degradation of misfolded proteins. This Synechocystis sp. (strain ATCC 27184 / PCC 6803 / Kazusa) protein is ATP-dependent Clp protease proteolytic subunit 1.